Reading from the N-terminus, the 392-residue chain is Probable tRNA sulfurtransferase (392 aa).

In terms of domain architecture, THUMP spans 61–168 (DEALKLLSKV…EFTYIYSEII (108 aa)). ATP contacts are provided by residues 185–186 (LL), 210–211 (HF), arginine 267, glycine 289, and glutamine 298.

The protein belongs to the ThiI family.

It localises to the cytoplasm. The catalysed reaction is [ThiI sulfur-carrier protein]-S-sulfanyl-L-cysteine + a uridine in tRNA + 2 reduced [2Fe-2S]-[ferredoxin] + ATP + H(+) = [ThiI sulfur-carrier protein]-L-cysteine + a 4-thiouridine in tRNA + 2 oxidized [2Fe-2S]-[ferredoxin] + AMP + diphosphate. It carries out the reaction [ThiS sulfur-carrier protein]-C-terminal Gly-Gly-AMP + S-sulfanyl-L-cysteinyl-[cysteine desulfurase] + AH2 = [ThiS sulfur-carrier protein]-C-terminal-Gly-aminoethanethioate + L-cysteinyl-[cysteine desulfurase] + A + AMP + 2 H(+). It participates in cofactor biosynthesis; thiamine diphosphate biosynthesis. Its function is as follows. Catalyzes the ATP-dependent transfer of a sulfur to tRNA to produce 4-thiouridine in position 8 of tRNAs, which functions as a near-UV photosensor. Also catalyzes the transfer of sulfur to the sulfur carrier protein ThiS, forming ThiS-thiocarboxylate. This is a step in the synthesis of thiazole, in the thiamine biosynthesis pathway. The sulfur is donated as persulfide by IscS. This is Probable tRNA sulfurtransferase from Acetivibrio thermocellus (strain ATCC 27405 / DSM 1237 / JCM 9322 / NBRC 103400 / NCIMB 10682 / NRRL B-4536 / VPI 7372) (Clostridium thermocellum).